A 555-amino-acid chain; its full sequence is E3 ubiquitin-protein ligase ARIH1 (555 aa).

Positions 1-47 are enriched in acidic residues; that stretch reads MDSDEGYNYEFDEDEECSEEDSGAEEEEDDDEDEPDDDNLDLGEVEL. Residues 1–93 form a disordered region; sequence MDSDEGYNYE…GGGGGPGHEQ (93 aa). Positions 65–90 are enriched in gly residues; sequence ETGGGGGSALGPGGGGGGGGGGGGPG. Positions 103–151 are UBA-like; it reads TAEQILQHMVECIREVNEVIQNPATITRILLSHFNWDKEKLMERYFDGN. K140 is modified (N6-acetyllysine). Positions 180-391 are TRIAD supradomain; the sequence is QDMPCQICYL…SAWYNCNRYN (212 aa). C184, C187, C201, H203, C206, C209, C229, C234, C274, C279, C295, C297, C302, C305, H310, C315, C342, and C345 together coordinate Zn(2+). The RING-type 1 zinc-finger motif lies at 184-234; the sequence is CQICYLNYPNSYFTGLECGHKFCMQCWSEYLTTKIMEEGMGQTISCPAHGC. Residues 254–315 form an IBR-type zinc finger; the sequence is LKYQHLITNS…GENWHDPVKC (62 aa). Residues 342–373 form an RING-type 2; atypical zinc finger; the sequence is CPKCHVTIEKDGGCNHMVCRNQNCKAEFCWVC. The active site involves C355. C360, C365, C370, C373, H380, and C387 together coordinate Zn(2+). The interval 406 to 555 is ariadne domain; it reads RAALQRYLFY…EKDLWEYIED (150 aa).

Belongs to the RBR family. Ariadne subfamily. As to quaternary structure, interacts (via the first RING-type zinc finger) with UBE2L3. Associates with cullin-RING ubiquitin ligase (CRL) complexes containing CUL1, CUL2 and CUL3. Interacts with neddylated CUL1. Interacts with neddylated CUL2. Interacts with neddylated CUL3. Interacts with neddylated CUL4A. Widely expressed.

It localises to the cytoplasm. The protein resides in the nucleus. Its subcellular location is the cajal body. It carries out the reaction [E2 ubiquitin-conjugating enzyme]-S-ubiquitinyl-L-cysteine + [acceptor protein]-L-lysine = [E2 ubiquitin-conjugating enzyme]-L-cysteine + [acceptor protein]-N(6)-ubiquitinyl-L-lysine.. The protein operates within protein modification; protein ubiquitination. Its activity is regulated as follows. Autoinhibited by the ariadne domain, which masks the second RING-type zinc finger that contains the active site and inhibits the E3 activity. Inhibition is relieved upon binding to neddylated cullin-RING ubiquitin ligase complexes, which activate the E3 ligase activity of ARIH1. Its function is as follows. E3 ubiquitin-protein ligase, which catalyzes ubiquitination of target proteins together with ubiquitin-conjugating enzyme E2 UBE2L3. Acts as an atypical E3 ubiquitin-protein ligase by working together with cullin-RING ubiquitin ligase (CRL) complexes and initiating ubiquitination of CRL substrates: associates with CRL complexes and specifically mediates addition of the first ubiquitin on CRLs targets. The initial ubiquitin is then elongated by CDC34/UBE2R1 and UBE2R2. E3 ubiquitin-protein ligase activity is activated upon binding to neddylated cullin-RING ubiquitin ligase complexes. Plays a role in protein translation in response to DNA damage by mediating ubiquitination of EIF4E2, the consequences of EIF4E2 ubiquitination are however unclear. According to a report, EIF4E2 ubiquitination leads to promote EIF4E2 cap-binding and protein translation arrest. According to another report EIF4E2 ubiquitination leads to its subsequent degradation. Acts as the ligase involved in ISGylation of EIF4E2. In vitro, controls the degradation of the LINC (LInker of Nucleoskeleton and Cytoskeleton) complex member SUN2 and may therefore have a role in the formation and localization of the LINC complex, and as a consequence, may act in nuclear subcellular localization and nuclear morphology. In Mus musculus (Mouse), this protein is E3 ubiquitin-protein ligase ARIH1 (Arih1).